Consider the following 107-residue polypeptide: MAAWSPAAAAPLLRGIRGLPLHHRMFATQTEGELRVTQILKEKFPRATAIKVTDISGGCGAMYEIKIESEEFKEKRTVQQHQMVNQALKEEIKEMHGLRIFTSVPKR.

It belongs to the BolA/IbaG family. As to quaternary structure, interacts with NFU1. In terms of tissue distribution, widely expressed.

The protein resides in the mitochondrion. Its function is as follows. Acts as a mitochondrial iron-sulfur (Fe-S) cluster assembly factor that facilitates (Fe-S) cluster insertion into a subset of mitochondrial proteins. Probably acts together with NFU1. This Homo sapiens (Human) protein is BolA-like protein 3.